A 78-amino-acid chain; its full sequence is Toxin OAIP 5 (78 aa).

Positions 1-19 (MLIVILTCALLVIYHAAAA) are cleaved as a signal peptide. A propeptide spanning residues 20–40 (EELEAKDVIESKALATLDEER) is cleaved from the precursor. Cystine bridges form between Cys-43-Cys-56, Cys-47-Cys-70, and Cys-64-Cys-75.

The protein belongs to the neurotoxin 12 (Hwtx-2) family. 05 (OAIP-5) subfamily. Expressed by the venom gland.

The protein resides in the secreted. Probable ion channel inhibitor. Shows insecticidal activity when injected into mealworms. The chain is Toxin OAIP 5 from Selenotypus plumipes (Australian featherleg tarantula).